The chain runs to 234 residues: Glutamine synthetase (234 aa).

Positions 1–234 (KAQEPWFGIE…TRLLVETTLL (234 aa)) constitute a GS catalytic domain. The segment at 126 to 157 (GSGGHVNFSNRQPESPPAGKQSRSSAKKLGKR) is disordered.

This sequence belongs to the glutamine synthetase family. In terms of assembly, homooctamer.

It localises to the cytoplasm. The enzyme catalyses L-glutamate + NH4(+) + ATP = L-glutamine + ADP + phosphate + H(+). In Dunaliella salina (Green alga), this protein is Glutamine synthetase.